The chain runs to 449 residues: Probable protoheme IX farnesyltransferase, mitochondrial (449 aa).

Residues 99 to 138 (TTSTTTTTNINENNIKNENNNENNNENSNNNNEQSIKSNQ) show a composition bias toward low complexity. The interval 99 to 140 (TTSTTTTTNINENNIKNENNNENNNENSNNNNEQSIKSNQTK) is disordered. 7 helical membrane passes run 163–183 (LTAIAGYVAACPIGAFDWVVL), 245–267 (MAVTPSLFVPGTLAACNVILYCW), 279–299 (TWIGAFVGAIPPLIGSVAATG), 303–323 (AIGMLLATFMYIWQIPHFLAL), 352–372 (SLAHALFGIPLPFIFDYFFNF), 374–394 (VHPITLTCMALSSASLALPFI), and 402–422 (LYIISLISLPITLFLSCLLRQ).

Belongs to the UbiA prenyltransferase family.

It localises to the mitochondrion membrane. Its function is as follows. Converts protoheme IX and farnesyl diphosphate to heme O. This is Probable protoheme IX farnesyltransferase, mitochondrial (cox10) from Dictyostelium discoideum (Social amoeba).